A 615-amino-acid chain; its full sequence is Kelch-like protein 26 (615 aa).

Over residues 1-21 the composition is skewed to gly residues; that stretch reads MAESGGSSGGAGGGGAFGAGP. Residues 1–35 form a disordered region; it reads MAESGGSSGGAGGGGAFGAGPGPERPNSTADKNGA. The residue at position 2 (alanine 2) is an N-acetylalanine. Residues 63 to 130 enclose the BTB domain; it reads LDVVLTINRE…AYSAEVTLDL (68 aa). Residues 165–266 enclose the BACK domain; it reads CLNIGQMATT…QSSELVDSVQ (102 aa). Kelch repeat units lie at residues 310–361, 362–413, 414–460, 461–508, 510–559, and 561–608; these read SLVT…VLDN, FVYV…VLCG, MVYA…ASGG, RLYI…GAGG, IYAL…LLER, and IYIV…PVLL.

May play a role in endo(sarco)plasmic reticulum (ER/SR) mitochondrial signaling. May be part of the ubiquitin-proteasome system (UPS) and affect ubiquitination and degradation of target substrates in cardiomyocytes. This is Kelch-like protein 26 (KLHL26) from Homo sapiens (Human).